The following is a 134-amino-acid chain: Small ribosomal subunit protein uS9c (134 aa).

A compositionally biased stretch (basic and acidic residues) spans 105–114 (DHHLTRDARA). Residues 105–134 (DHHLTRDARAKERKKYGLHKARKAPQYSKR) form a disordered region. Over residues 115 to 134 (KERKKYGLHKARKAPQYSKR) the composition is skewed to basic residues.

It belongs to the universal ribosomal protein uS9 family.

Its subcellular location is the plastid. The protein localises to the cyanelle. The sequence is that of Small ribosomal subunit protein uS9c (rps9) from Cyanophora paradoxa.